We begin with the raw amino-acid sequence, 115 residues long: U3-lycotoxin-Ls1d (115 aa).

A signal peptide spans 1-20 (MKFVLLFGVLLVTLFSYSSA). Positions 21–44 (EMLDDFDQADEDELLSLIEKEEAR) are excised as a propeptide. 4 disulfide bridges follow: Cys48–Cys63, Cys55–Cys72, Cys62–Cys87, and Cys74–Cys85.

The protein belongs to the neurotoxin 19 (CSTX) family. 01 subfamily. As to expression, expressed by the venom gland.

Its subcellular location is the secreted. In Lycosa singoriensis (Wolf spider), this protein is U3-lycotoxin-Ls1d.